The following is a 279-amino-acid chain: Eukaryotic translation initiation factor 3 subunit J (279 aa).

Disordered stretches follow at residues 1-74 (MSWD…SQKS) and 229-279 (ERQA…DDFM). Positions 20–39 (WEDEDNDDPLLESWDIDEEE) are enriched in acidic residues. The stretch at 34–74 (DIDEEEVARKKKEEEAKKKAEKEALKQKQQEAKNKKLSQKS) forms a coiled coil. A compositionally biased stretch (basic and acidic residues) spans 40 to 67 (VARKKKEEEAKKKAEKEALKQKQQEAKN). The segment covering 268 to 279 (DDFDDFDDDDFM) has biased composition (acidic residues).

This sequence belongs to the eIF-3 subunit J family. As to quaternary structure, component of the eukaryotic translation initiation factor 3 (eIF-3) complex.

The protein localises to the cytoplasm. In terms of biological role, component of the eukaryotic translation initiation factor 3 (eIF-3) complex, which is involved in protein synthesis of a specialized repertoire of mRNAs and, together with other initiation factors, stimulates binding of mRNA and methionyl-tRNAi to the 40S ribosome. The eIF-3 complex specifically targets and initiates translation of a subset of mRNAs involved in cell proliferation. The polypeptide is Eukaryotic translation initiation factor 3 subunit J (Meyerozyma guilliermondii (strain ATCC 6260 / CBS 566 / DSM 6381 / JCM 1539 / NBRC 10279 / NRRL Y-324) (Yeast)).